Here is a 427-residue protein sequence, read N- to C-terminus: Enolase (427 aa).

(2R)-2-phosphoglycerate is bound at residue Q163. Catalysis depends on E205, which acts as the Proton donor. Residues D242, E285, and D312 each coordinate Mg(2+). (2R)-2-phosphoglycerate-binding residues include K337, R366, S367, and K388. K337 acts as the Proton acceptor in catalysis.

Belongs to the enolase family. Requires Mg(2+) as cofactor.

It is found in the cytoplasm. It localises to the secreted. Its subcellular location is the cell surface. The catalysed reaction is (2R)-2-phosphoglycerate = phosphoenolpyruvate + H2O. Its pathway is carbohydrate degradation; glycolysis; pyruvate from D-glyceraldehyde 3-phosphate: step 4/5. Functionally, catalyzes the reversible conversion of 2-phosphoglycerate (2-PG) into phosphoenolpyruvate (PEP). It is essential for the degradation of carbohydrates via glycolysis. This chain is Enolase, found in Burkholderia mallei (strain NCTC 10247).